A 291-amino-acid polypeptide reads, in one-letter code: Small ribosomal subunit protein uS2 (291 aa).

Residues 238 to 247 are compositionally biased toward acidic residues; it reads DEESGDELDE. Residues 238-291 are disordered; it reads DEESGDELDESVSLHEEGREITDYENYTPPEEREYSVNDEGDVFDEDESLYEGR. The segment covering 249–259 has biased composition (basic and acidic residues); sequence VSLHEEGREIT. Over residues 274–291 the composition is skewed to acidic residues; that stretch reads VNDEGDVFDEDESLYEGR.

This sequence belongs to the universal ribosomal protein uS2 family.

The sequence is that of Small ribosomal subunit protein uS2 (rpsB) from Treponema pallidum (strain Nichols).